An 839-amino-acid chain; its full sequence is Toll-like receptor 4 (839 aa).

The signal sequence occupies residues 1-23 (MMSASRLAGTLIPAMAFLSCVRP). The Extracellular portion of the chain corresponds to 24–631 (ESWEPCVEVV…SLNITCQMNK (608 aa)). The cysteines at positions 29 and 40 are disulfide-linked. N-linked (GlcNAc...) asparagine glycosylation is present at N35. 5 LRR repeats span residues 55–76 (STKNLDLSFNPLRHLGSYSFFS), 79–100 (ELQVLDLSRCEIQTIEDGAYQS), 103–124 (HLSTLILTGNPIQSLALGAFSG), 127–148 (SLQKLVAVETNLASLENFPIGH), and 151–172 (TLKELNVAHNLIQSFKLPEYFS). An N-linked (GlcNAc...) asparagine glycan is attached at N173. LRR repeat units lie at residues 176–199 (NLEHLDLSSNKIQSIYCTDLRVLH), 205–225 (NLSLDLSLNPMNFIQPGAFKE), and 227–247 (RLHKLTLRNNFDSLNVMKTCI). N-linked (GlcNAc...) asparagine glycosylation occurs at N205. C281 and C306 are oxidised to a cystine. 2 N-linked (GlcNAc...) asparagine glycosylation sites follow: N282 and N309. 10 LRR repeats span residues 331-351 (GWQHLELVNCKFGQFPTLKLK), 352-373 (SLKRLTFTSNKGGNAFSEVDLP), 374-394 (SLEFLDLSRNGLSFKGCCSQS), 400-422 (SLKYLDLSFNGVITMSSNFLGLE), 423-444 (QLEHLDFQHSNLKQMSEFSVFL), 448-456 (NLIYLDISH), 472-495 (SLEVLKMAGNSFQENFLPDIFTEL), 497-518 (NLTFLDLSQCQLEQLSPTAFNS), 521-542 (SLQVLNMSHNNFFSLDTFPYKC), and 545-565 (SLQVLDYSLNHIMTSKKQELQ). C390 and C391 are joined by a disulfide. 2 N-linked (GlcNAc...) asparagine glycosylation sites follow: N497 and N526. The N-linked (GlcNAc...) asparagine glycan is linked to N575. One can recognise an LRRCT domain in the interval 579-629 (NDFACTCEHQSFLQWIKDQRQLLVEVERMECATPSDKQGMPVLSLNITCQM). 2 disulfides stabilise this stretch: C583–C609 and C585–C627. Residues N624 and N630 are each glycosylated (N-linked (GlcNAc...) asparagine). Residues 632-652 (TIIGVSVLSVLVVSVVAVLVY) traverse the membrane as a helical segment. Residues 653–839 (KFYFHLMLLA…GCNWQEATSI (187 aa)) are Cytoplasmic-facing. Residues 672–815 (NIYDAFVIYS…IFWRRLRKAL (144 aa)) form the TIR domain.

This sequence belongs to the Toll-like receptor family. In terms of assembly, belongs to the lipopolysaccharide (LPS) receptor, a multi-protein complex containing at least CD14, LY96 and TLR4. Binding to bacterial LPS leads to homodimerization. Interacts with LY96 via the extracellular domain. Interacts with MYD88. Interacts (via TIR domains) with TIRAP. Interacts with TICAM2. Interacts with NOX4. Interacts with CNPY3. Interacts with HSP90B1. The interaction with both CNPY3 and HSP90B1 is required for proper folding in the endoplasmic reticulum. Interacts with MAP3K21; this interaction leads to negative regulation of TLR4 signaling. Interacts with CD36, following CD36 stimulation by oxLDL or amyloid-beta 42, and forms a heterodimer with TLR6. The trimeric complex is internalized and triggers inflammatory response. LYN kinase activity facilitates TLR4-TLR6 heterodimerization and signal initiation. Interacts with TICAM1 in response to LPS in a WDFY1-dependent manner. Interacts with WDFY1 in response to LPS. Interacts with SMPDL3B. Interacts with CEACAM1; upon lipopolysaccharide stimulation, forms a complex including TLR4 and the phosphorylated form of SYK and CEACAM1, which in turn, recruits PTPN6 that dephosphorylates SYK, reducing the production of reactive oxygen species (ROS) and lysosome disruption, which in turn, reduces the activity of the inflammasome. Interacts with RFTN1; the interaction occurs in response to lipopolysaccharide stimulation. Interacts with SCIMP; the interaction occurs in response to lipopolysaccharide stimulation and is enhanced by phosphorylation of SCIMP by LYN. This interaction facilitates the phosphorylation of TLR4 by LYN which elicits a selective cytokine response in macrophages. Interacts with TRAF3IP3. Interacts with TREM1; this interaction enhances TLR4-mediated inflammatory response. Interacts with ZG16B/PAUF. Interacts with CD82; this interaction inhibits TLR4-mediated signaling pathway. Interacts with neutrophil recruitment protein from Aedes aegypti saliva; the interaction probably promotes activation of canonical NF-kappa-B signaling in skin-resident macrophages and subsequent expression of neutrophil chemoattractants. As to quaternary structure, (Microbial infection) In case of infection, interacts with uropathogenic E.coli protein TcpC. (Microbial infection) In case of infection, interacts with B.melitensis protein TcpB; TcpB abolishes the TLR4-TIRAP interaction in vitro. In terms of assembly, (Microbial infection) Interacts with ebolavirus protein GP; this interaction leads to the production of proinflammatory cytokines and suppressor of cytokine signaling 1/SOCS1. Post-translationally, N-Glycosylation of Asn-526 and Asn-575 by STT3A-containing OST-A complex is necessary for the expression of TLR4 on the cell surface and the LPS-response. Likewise, mutants lacking two or more of the other N-glycosylation sites were deficient in interaction with LPS. In terms of processing, phosphorylated on tyrosine residues by LYN after binding lipopolysaccharide. Ubiquitinated by RNF128 via 'Lys-28'-linked polyubiquitin chains, leading to proteasomal degradation. In terms of tissue distribution, highly expressed in placenta, spleen and peripheral blood leukocytes. Detected in monocytes, macrophages, dendritic cells and several types of T-cells. Expressed in pancreatic cancer cells but not in normal pancreatic cells (at protein level).

It localises to the cell membrane. The protein localises to the early endosome. Its subcellular location is the cell projection. The protein resides in the ruffle. In terms of biological role, transmembrane receptor that functions as a pattern recognition receptor recognizing pathogen- and damage-associated molecular patterns (PAMPs and DAMPs) to induce innate immune responses via downstream signaling pathways. At the plasma membrane, cooperates with LY96 to mediate the innate immune response to bacterial lipopolysaccharide (LPS). Also involved in LPS-independent inflammatory responses triggered by free fatty acids, such as palmitate, and Ni(2+). Mechanistically, acts via MYD88, TIRAP and TRAF6, leading to NF-kappa-B activation, cytokine secretion and the inflammatory response. Alternatively, CD14-mediated TLR4 internalization via endocytosis is associated with the initiation of a MYD88-independent signaling via the TICAM1-TBK1-IRF3 axis leading to type I interferon production. In addition to the secretion of proinflammatory cytokines, initiates the activation of NLRP3 inflammasome and formation of a positive feedback loop between autophagy and NF-kappa-B signaling cascade. In complex with TLR6, promotes inflammation in monocytes/macrophages by associating with TLR6 and the receptor CD86. Upon ligand binding, such as oxLDL or amyloid-beta 42, the TLR4:TLR6 complex is internalized and triggers inflammatory response, leading to NF-kappa-B-dependent production of CXCL1, CXCL2 and CCL9 cytokines, via MYD88 signaling pathway, and CCL5 cytokine, via TICAM1 signaling pathway. In myeloid dendritic cells, vesicular stomatitis virus glycoprotein G but not LPS promotes the activation of IRF7, leading to type I IFN production in a CD14-dependent manner. Required for the migration-promoting effects of ZG16B/PAUF on pancreatic cancer cells. The polypeptide is Toll-like receptor 4 (TLR4) (Homo sapiens (Human)).